The sequence spans 135 residues: ATP synthase epsilon chain (135 aa).

Belongs to the ATPase epsilon chain family. In terms of assembly, F-type ATPases have 2 components, CF(1) - the catalytic core - and CF(0) - the membrane proton channel. CF(1) has five subunits: alpha(3), beta(3), gamma(1), delta(1), epsilon(1). CF(0) has three main subunits: a, b and c.

It localises to the cell inner membrane. Its function is as follows. Produces ATP from ADP in the presence of a proton gradient across the membrane. This Brucella anthropi (strain ATCC 49188 / DSM 6882 / CCUG 24695 / JCM 21032 / LMG 3331 / NBRC 15819 / NCTC 12168 / Alc 37) (Ochrobactrum anthropi) protein is ATP synthase epsilon chain.